The primary structure comprises 396 residues: Purine ribonucleoside efflux pump NepI (396 aa).

At 1–21 (MSEFIAENRGADAITRPNWSA) the chain is on the cytoplasmic side. Residues 22-42 (VFSVAFCVACLIIVEFLPVSL) form a helical membrane-spanning segment. Topologically, residues 43–54 (LTPMAQDLGISE) are periplasmic. The chain crosses the membrane as a helical span at residues 55-75 (GVAGQSVTVTAFVAMFASLFI). Residues 76-85 (TQTIQATDRR) are Cytoplasmic-facing. Residues 86–106 (YVVILFAVLLTLSCLLVSFAN) traverse the membrane as a helical segment. Residue serine 107 is a topological domain, periplasmic. The helical transmembrane segment at 108–128 (FSLLLIGRACLGLALGGFWAM) threads the bilayer. Residues 129–147 (SASLTMRLVPPRTVPKALS) are Cytoplasmic-facing. Residues 148-168 (VIFGAVSIALVIAAPLGSFLG) form a helical membrane-spanning segment. Residues 169-175 (ELIGWRN) lie on the Periplasmic side of the membrane. A helical membrane pass occupies residues 176 to 196 (VFNAAAAMGVLCIFWIIKSLP). The Cytoplasmic portion of the chain corresponds to 197-215 (SLPGEPSHQKQNTFRLLQR). The helical transmembrane segment at 216–236 (PGVMAGMIAIFMSFAGQFAFF) threads the bilayer. The Periplasmic segment spans residues 237–255 (TYIRPVYMNLAGFGVDGLT). Residues 256-276 (LVLLSFGIASFVGTSLSSFIL) traverse the membrane as a helical segment. Topologically, residues 277 to 281 (KRSVK) are cytoplasmic. A helical transmembrane segment spans residues 282–302 (LALAGAPFVLALSALVLTLWG). At 303–305 (SDK) the chain is on the periplasmic side. The chain crosses the membrane as a helical span at residues 306 to 326 (IVATGVAIIWGLTFALIPVGW). At 327-343 (STWITRSLADQAEKAGS) the chain is on the cytoplasmic side. Residues 344–364 (IQVAVIQLANTCGAAIGGYAL) form a helical membrane-spanning segment. Residues 365-366 (DN) lie on the Periplasmic side of the membrane. Residues 367–387 (IGLTSPLMLSGTLMLLTALLV) form a helical membrane-spanning segment. Topologically, residues 388 to 396 (TAKVKMKKS) are cytoplasmic.

Belongs to the major facilitator superfamily. DHA1 family. NepI (TC 2.A.1.2.26) subfamily.

The protein localises to the cell inner membrane. The catalysed reaction is inosine(in) + H(+)(out) = inosine(out) + H(+)(in). It carries out the reaction guanosine(in) + H(+)(out) = guanosine(out) + H(+)(in). Its function is as follows. Involved in the efflux of purine ribonucleosides, such as inosine and guanosine. In Escherichia coli O1:K1 / APEC, this protein is Purine ribonucleoside efflux pump NepI.